Reading from the N-terminus, the 249-residue chain is 5'-nucleotidase SurE (249 aa).

The a divalent metal cation site is built by Asp9, Asp10, Ser40, and Asn92.

The protein belongs to the SurE nucleotidase family. The cofactor is a divalent metal cation.

It is found in the cytoplasm. It catalyses the reaction a ribonucleoside 5'-phosphate + H2O = a ribonucleoside + phosphate. Its function is as follows. Nucleotidase that shows phosphatase activity on nucleoside 5'-monophosphates. The polypeptide is 5'-nucleotidase SurE (Shewanella oneidensis (strain ATCC 700550 / JCM 31522 / CIP 106686 / LMG 19005 / NCIMB 14063 / MR-1)).